The primary structure comprises 577 residues: Anthranilate synthase alpha subunit 1, chloroplastic (577 aa).

A chloroplast-targeting transit peptide spans 1–34 (MASLVLSLRIAPSTPPLGLGGGRFRGRRGAVACR).

This sequence belongs to the anthranilate synthase component I family. Heterotetramer consisting of two non-identical subunits: a beta subunit and a large alpha subunit.

The protein resides in the plastid. It localises to the chloroplast. The enzyme catalyses chorismate + L-glutamine = anthranilate + pyruvate + L-glutamate + H(+). The protein operates within amino-acid biosynthesis; L-tryptophan biosynthesis; L-tryptophan from chorismate: step 1/5. With respect to regulation, feedback inhibition by tryptophan. Functionally, part of a heterotetrameric complex that catalyzes the two-step biosynthesis of anthranilate, an intermediate in the biosynthesis of L-tryptophan. In the first step, the glutamine-binding beta subunit of anthranilate synthase (AS) provides the glutamine amidotransferase activity which generates ammonia as a substrate that, along with chorismate, is used in the second step, catalyzed by the large alpha subunit of AS to produce anthranilate. This chain is Anthranilate synthase alpha subunit 1, chloroplastic, found in Oryza sativa subsp. japonica (Rice).